A 329-amino-acid chain; its full sequence is Serpentine receptor class alpha-3 (329 aa).

7 consecutive transmembrane segments (helical) span residues 25–45, 57–77, 104–124, 144–164, 187–207, 238–258, and 273–293; these read LIYFVLIITTLFFTFFALKVI, ILLYQNLFSANIHQIFLGITI, YLEMFIAGLSGMVYGQTGLLF, GIITSIIVLLLSGSTARIIIW, TMFFSICTFISLFNLVISLLI, ICFLTFFQFIFMFIYSFGVFL, and FWVVWVYTIPFIAASFPILLI.

This sequence belongs to the nematode receptor-like protein sra family.

It is found in the membrane. The polypeptide is Serpentine receptor class alpha-3 (sra-3) (Caenorhabditis elegans).